The primary structure comprises 398 residues: Acetate kinase (398 aa).

Residue asparagine 7 coordinates Mg(2+). Lysine 14 is an ATP binding site. Arginine 91 is a substrate binding site. Aspartate 148 functions as the Proton donor/acceptor in the catalytic mechanism. ATP-binding positions include 208–212 (HLGNG), 283–285 (DSR), and 331–335 (GIGEN). Glutamate 384 provides a ligand contact to Mg(2+).

The protein belongs to the acetokinase family. As to quaternary structure, homodimer. It depends on Mg(2+) as a cofactor. The cofactor is Mn(2+).

The protein localises to the cytoplasm. The enzyme catalyses acetate + ATP = acetyl phosphate + ADP. The protein operates within metabolic intermediate biosynthesis; acetyl-CoA biosynthesis; acetyl-CoA from acetate: step 1/2. In terms of biological role, catalyzes the formation of acetyl phosphate from acetate and ATP. Can also catalyze the reverse reaction. In Halothermothrix orenii (strain H 168 / OCM 544 / DSM 9562), this protein is Acetate kinase.